The primary structure comprises 185 residues: Prorelaxin 1 (185 aa).

The signal sequence occupies residues 1–22 (MSSRFLLQLLGFWLLLSQPCRT). Disulfide bonds link C36–C171, C48–C185, and C170–C175. Residues 58 to 156 (SQEEPALLAR…LKYLQSDTHS (99 aa)) constitute a propeptide, connecting peptide. The interval 135 to 161 (RLGEAEDGSPPGLKYLQSDTHSRKKRE) is disordered.

This sequence belongs to the insulin family. Heterodimer of a B chain and an A chain linked by two disulfide bonds.

The protein localises to the secreted. Its function is as follows. Relaxin is an ovarian hormone that acts with estrogen to produce dilatation of the birth canal in many mammals. The polypeptide is Prorelaxin 1 (Rln1) (Mus musculus (Mouse)).